Reading from the N-terminus, the 114-residue chain is MDFNRTKGLKKDSDFRKVYKHGKSFANKYLVIYILKNKSDYSRVGISVSKKVGKAITRNRVRRLIKEAYRLNIDEKIKPGYDIVFIARVSSKDATFKDIDKSIKNLVKRTDISI.

It belongs to the RnpA family. As to quaternary structure, consists of a catalytic RNA component (M1 or rnpB) and a protein subunit.

It catalyses the reaction Endonucleolytic cleavage of RNA, removing 5'-extranucleotides from tRNA precursor.. Functionally, RNaseP catalyzes the removal of the 5'-leader sequence from pre-tRNA to produce the mature 5'-terminus. It can also cleave other RNA substrates such as 4.5S RNA. The protein component plays an auxiliary but essential role in vivo by binding to the 5'-leader sequence and broadening the substrate specificity of the ribozyme. This is Ribonuclease P protein component from Clostridioides difficile (strain 630) (Peptoclostridium difficile).